The chain runs to 306 residues: Nucleotide-binding protein MUL_1815 (306 aa).

29–36 (GLSGAGRG) is an ATP binding site. Position 80-83 (80-83 (DVRS)) interacts with GTP.

The protein belongs to the RapZ-like family.

Its function is as follows. Displays ATPase and GTPase activities. This is Nucleotide-binding protein MUL_1815 from Mycobacterium ulcerans (strain Agy99).